The following is a 240-amino-acid chain: 2,3,4,5-tetrahydropyridine-2,6-dicarboxylate N-acetyltransferase (240 aa).

It belongs to the transferase hexapeptide repeat family. DapH subfamily.

The enzyme catalyses (S)-2,3,4,5-tetrahydrodipicolinate + acetyl-CoA + H2O = L-2-acetamido-6-oxoheptanedioate + CoA. Its pathway is amino-acid biosynthesis; L-lysine biosynthesis via DAP pathway; LL-2,6-diaminopimelate from (S)-tetrahydrodipicolinate (acetylase route): step 1/3. Catalyzes the transfer of an acetyl group from acetyl-CoA to tetrahydrodipicolinate. This is 2,3,4,5-tetrahydropyridine-2,6-dicarboxylate N-acetyltransferase from Shouchella clausii (strain KSM-K16) (Alkalihalobacillus clausii).